Here is a 93-residue protein sequence, read N- to C-terminus: MTKSDLIERLSSSQQHLAAKDVEAAVREILECMAATLESGNRIEIRGFGSFSLHYRAPRVGRNPKTGEKVELLAKSVPHFKPGKELRERVNSL.

It belongs to the bacterial histone-like protein family. As to quaternary structure, heterodimer of an alpha and a beta chain.

Functionally, this protein is one of the two subunits of integration host factor, a specific DNA-binding protein that functions in genetic recombination as well as in transcriptional and translational control. This Tolumonas auensis (strain DSM 9187 / NBRC 110442 / TA 4) protein is Integration host factor subunit beta.